A 137-amino-acid polypeptide reads, in one-letter code: Gonadotropin subunit beta-1 (137 aa).

A signal peptide spans 1-24 (MYCTHLMTLQLVVMAMLWVTPVRA). 5 disulfides stabilise this stretch: cysteine 32/cysteine 78, cysteine 46/cysteine 93, cysteine 55/cysteine 108, cysteine 59/cysteine 110, and cysteine 113/cysteine 120. Asparagine 36 carries an N-linked (GlcNAc...) asparagine glycan.

Belongs to the glycoprotein hormones subunit beta family. As to quaternary structure, heterodimer of an alpha and a beta chain.

Its subcellular location is the secreted. In terms of biological role, involved in gametogenesis and steroidogenesis. This Oncorhynchus keta (Chum salmon) protein is Gonadotropin subunit beta-1 (cgba).